Consider the following 380-residue polypeptide: Lipoyl synthase, mitochondrial (380 aa).

Positions 104, 109, 115, 135, 139, 142, and 350 each coordinate [4Fe-4S] cluster. The Radical SAM core domain maps to 120–339 (EHGTQTATIM…ETRGNELGFL (220 aa)).

The protein belongs to the radical SAM superfamily. Lipoyl synthase family. [4Fe-4S] cluster serves as cofactor.

Its subcellular location is the mitochondrion. The enzyme catalyses [[Fe-S] cluster scaffold protein carrying a second [4Fe-4S](2+) cluster] + N(6)-octanoyl-L-lysyl-[protein] + 2 oxidized [2Fe-2S]-[ferredoxin] + 2 S-adenosyl-L-methionine + 4 H(+) = [[Fe-S] cluster scaffold protein] + N(6)-[(R)-dihydrolipoyl]-L-lysyl-[protein] + 4 Fe(3+) + 2 hydrogen sulfide + 2 5'-deoxyadenosine + 2 L-methionine + 2 reduced [2Fe-2S]-[ferredoxin]. It functions in the pathway protein modification; protein lipoylation via endogenous pathway; protein N(6)-(lipoyl)lysine from octanoyl-[acyl-carrier-protein]: step 2/2. In terms of biological role, catalyzes the radical-mediated insertion of two sulfur atoms into the C-6 and C-8 positions of the octanoyl moiety bound to the lipoyl domains of lipoate-dependent enzymes, thereby converting the octanoylated domains into lipoylated derivatives. This is Lipoyl synthase, mitochondrial from Culex quinquefasciatus (Southern house mosquito).